The sequence spans 397 residues: uncharacterized protein (397 aa).

A run of 4 helical transmembrane segments spans residues 62 to 79 (VLLFGILIFSIFVALIAI), 92 to 109 (WYGLLAFGVLTSLELVVT), 135 to 154 (VVFLPLICVYSLSILYSTLS), and 167 to 189 (AFLKTMLFTLLICSFILNFFPGI).

It is found in the cell membrane. This is an uncharacterized protein from Archaeoglobus fulgidus (strain ATCC 49558 / DSM 4304 / JCM 9628 / NBRC 100126 / VC-16).